Here is a 217-residue protein sequence, read N- to C-terminus: Adapter protein MecA (217 aa).

Belongs to the MecA family. Homodimer.

Its function is as follows. Enables the recognition and targeting of unfolded and aggregated proteins to the ClpC protease or to other proteins involved in proteolysis. Acts negatively in the development of competence by binding ComK and recruiting it to the ClpCP protease. When overexpressed, inhibits sporulation. Also involved in Spx degradation by ClpC. This Alkalihalophilus pseudofirmus (strain ATCC BAA-2126 / JCM 17055 / OF4) (Bacillus pseudofirmus) protein is Adapter protein MecA.